The chain runs to 300 residues: Non-secreted LysM effector LysM16 (300 aa).

Residues 176 to 222 enclose the LysM domain; sequence EWHTVFSGDTCQLIEAEYGITLEKFIALNTYVNSTCGNIWPDYAYCV.

It belongs to the secreted LysM effector family.

Functionally, non-secreted LysM effector that might be involved in manipulation of host defenses for successful infection. In Penicillium expansum (Blue mold rot fungus), this protein is Non-secreted LysM effector LysM16.